A 457-amino-acid chain; its full sequence is Galactose/lactose metabolism regulatory protein GAL80 (457 aa).

The disordered stretch occupies residues 333–364; it reads NGTDNNGAAAIKDKEKVTKSPSPSTGTSEEEQ.

The protein to yeast GAL80.

In terms of biological role, this protein is a negative regulator for the gene expression of the lactose/galactose metabolic genes. It seems to block activation by the transcriptional activator LAC9 in the absence of an inducing sugar. The polypeptide is Galactose/lactose metabolism regulatory protein GAL80 (GAL80) (Kluyveromyces lactis (strain ATCC 8585 / CBS 2359 / DSM 70799 / NBRC 1267 / NRRL Y-1140 / WM37) (Yeast)).